Here is a 115-residue protein sequence, read N- to C-terminus: uncharacterized protein (115 aa).

This is an uncharacterized protein from Bacillus subtilis (strain 168).